Consider the following 219-residue polypeptide: Cytidylate kinase (219 aa).

10 to 18 (GPAAAGKST) is a binding site for ATP.

This sequence belongs to the cytidylate kinase family. Type 1 subfamily.

The protein resides in the cytoplasm. The catalysed reaction is CMP + ATP = CDP + ADP. The enzyme catalyses dCMP + ATP = dCDP + ADP. The sequence is that of Cytidylate kinase from Staphylococcus aureus (strain bovine RF122 / ET3-1).